The chain runs to 289 residues: 4-diphosphocytidyl-2-C-methyl-D-erythritol kinase (289 aa).

Lys10 is a catalytic residue. 94-104 (PVAAGLAGGSS) is an ATP binding site. Residue Asp136 is part of the active site.

Belongs to the GHMP kinase family. IspE subfamily.

The catalysed reaction is 4-CDP-2-C-methyl-D-erythritol + ATP = 4-CDP-2-C-methyl-D-erythritol 2-phosphate + ADP + H(+). The protein operates within isoprenoid biosynthesis; isopentenyl diphosphate biosynthesis via DXP pathway; isopentenyl diphosphate from 1-deoxy-D-xylulose 5-phosphate: step 3/6. Its function is as follows. Catalyzes the phosphorylation of the position 2 hydroxy group of 4-diphosphocytidyl-2C-methyl-D-erythritol. This Bacillus cytotoxicus (strain DSM 22905 / CIP 110041 / 391-98 / NVH 391-98) protein is 4-diphosphocytidyl-2-C-methyl-D-erythritol kinase.